The primary structure comprises 485 residues: MAKSPAAVKAEVRRMRRIRRIHFVGIGGVGMCGIAEVLLNLGYEVSGSDLKESASTERLQSFGAQIFIGHQAGNVAGADVLVVSSAINSANPEVALALEQRIPVVPRAEMLAELMRYRHGIAVAGTHGKTTTTSLLASVFAAGGLDPTFVIGGRLTAAGTNAQLGSSRYLIAEADESDASFLHLQPMVAVVTNIDADHMSTYGGDFGKLKKTFVEFLHNLPFYGLAVLCVDDPVVREIIPQIGRPTTTYGFSEDADVRAINVRQEGMRTYFTVLRDGCEPLDVSVHMPGNHNVLNALATIAIATDEGIDDEAIVQGLAEFAGVGRRFQVYGNLPVDGGSVMLVDDYGHHPREVAAVIKAVRGGWPERRLVMVYQPHRYSRTRDLYDDFVQVLGESNVLLLMEVYPAGEEPIPGADSRQLCHSIRQRGQLDPIYVERGVDLAPLVKPLLRAGDILLCQGAGDIGGLAPQLLKSPLFGGDDAARKTK.

ATP is bound at residue 125–131 (GTHGKTT).

Belongs to the MurCDEF family.

It localises to the cytoplasm. The enzyme catalyses UDP-N-acetyl-alpha-D-muramate + L-alanine + ATP = UDP-N-acetyl-alpha-D-muramoyl-L-alanine + ADP + phosphate + H(+). Its pathway is cell wall biogenesis; peptidoglycan biosynthesis. In terms of biological role, cell wall formation. The polypeptide is UDP-N-acetylmuramate--L-alanine ligase (Stutzerimonas stutzeri (strain A1501) (Pseudomonas stutzeri)).